The sequence spans 90 residues: Small ribosomal subunit protein uS19 (90 aa).

Belongs to the universal ribosomal protein uS19 family.

In terms of biological role, protein S19 forms a complex with S13 that binds strongly to the 16S ribosomal RNA. This is Small ribosomal subunit protein uS19 from Rhizorhabdus wittichii (strain DSM 6014 / CCUG 31198 / JCM 15750 / NBRC 105917 / EY 4224 / RW1) (Sphingomonas wittichii).